A 338-amino-acid chain; its full sequence is Aspartate-semialdehyde dehydrogenase (338 aa).

NADP(+) contacts are provided by residues 13–16 (TGNV) and 41–42 (NS). Arg-101 lines the phosphate pocket. The active-site Acyl-thioester intermediate is Cys-132. Gln-159 serves as a coordination point for substrate. 162–163 (SG) serves as a coordination point for NADP(+). Lys-216 lines the phosphate pocket. Arg-237 provides a ligand contact to substrate. His-244 serves as the catalytic Proton acceptor. Residue Asn-317 coordinates NADP(+).

The protein belongs to the aspartate-semialdehyde dehydrogenase family. Homodimer.

It catalyses the reaction L-aspartate 4-semialdehyde + phosphate + NADP(+) = 4-phospho-L-aspartate + NADPH + H(+). Its pathway is amino-acid biosynthesis; L-lysine biosynthesis via DAP pathway; (S)-tetrahydrodipicolinate from L-aspartate: step 2/4. It functions in the pathway amino-acid biosynthesis; L-methionine biosynthesis via de novo pathway; L-homoserine from L-aspartate: step 2/3. The protein operates within amino-acid biosynthesis; L-threonine biosynthesis; L-threonine from L-aspartate: step 2/5. Catalyzes the NADPH-dependent formation of L-aspartate-semialdehyde (L-ASA) by the reductive dephosphorylation of L-aspartyl-4-phosphate. The protein is Aspartate-semialdehyde dehydrogenase of Rickettsia bellii (strain RML369-C).